We begin with the raw amino-acid sequence, 348 residues long: MPTLVNGPRRDSTEGFDTDIITLPRFIIEHQKQFKNATGDFTLVLNALQFAFKFVSHTIRRAELVNLVGLAGASNFTGDQQKKLDVLGDEIFINAMRASGIIKVLVSEEQEDLIVFPTNTGSYAVCCDPIDGSSNLDAGVSVGTIASIFRLLPDSSGTINDVLRCGKEMVAACYAMYGSSTHLVLTLGDGVDGFTLDTNLGEFILTHPNLRIPPQKAIYSINEGNTLYWNETIRTFIEKVKQPQADNNNKPFSARYVGSMVADVHRTFLYGGLFAYPCDKKSPNGKLRLLYEAFPMAFLMEQAGGKAVNDRGERILDLVPSHIHDKSSIWLGSSGEIDKFLDHIGKSQ.

The short motif at 2–5 (PTLV) is the Pro/N-degron element. A Phosphoserine modification is found at serine 12. AMP-binding positions include 27-31 (IIEHQ) and 38-42 (TGDFT). Residues aspartate 79 and glutamate 108 each coordinate Mg(2+). 122–123 (SY) serves as a coordination point for AMP. Residues aspartate 128, isoleucine 130, and aspartate 131 each contribute to the Mg(2+) site. A substrate-binding site is contributed by 131 to 134 (DGSS). Arginine 150 lines the AMP pocket. Residues 222–225 (NEGN), 255–260 (RYVGSM), tyrosine 276, and 286–288 (KLR) contribute to the substrate site. Residue glutamate 292 participates in Mg(2+) binding.

The protein belongs to the FBPase class 1 family. In terms of assembly, homotetramer. It depends on Mg(2+) as a cofactor. Post-translationally, ubiquitinated. Targeted for proteasomal degradation when cells are shifted to glucose-containing growth medium.

It catalyses the reaction beta-D-fructose 1,6-bisphosphate + H2O = beta-D-fructose 6-phosphate + phosphate. It participates in carbohydrate biosynthesis; gluconeogenesis. With respect to regulation, subject to complex allosteric regulation. The enzyme can assume an active R-state, or an inactive T-state. Intermediate conformations may exist. AMP acts as allosteric inhibitor. AMP binding affects the turnover of bound substrate and not the affinity for substrate. The protein is Fructose-1,6-bisphosphatase (FBP1) of Saccharomyces cerevisiae (strain ATCC 204508 / S288c) (Baker's yeast).